Consider the following 206-residue polypeptide: MPTVDLYNIEGQKVGDLQLAETVFAVEVNEDVLHQVVVAQLANKRQGNQSAKTRAEVSGGGKKPWRQKGTGRARQGSIRAPQWIHGGVVFAPKPRDYKMSIPKSMRRVAMKSALTSKVNENELVVLESLELDAPKTKEMVKMINAFEGKKPLIVVPESNEVIYKSVRNIEGATVVPVNNINVYDILKHDKFIITKEAVSKIEEVYA.

Residues 45–76 (RQGNQSAKTRAEVSGGGKKPWRQKGTGRARQG) are disordered.

This sequence belongs to the universal ribosomal protein uL4 family. As to quaternary structure, part of the 50S ribosomal subunit.

Functionally, one of the primary rRNA binding proteins, this protein initially binds near the 5'-end of the 23S rRNA. It is important during the early stages of 50S assembly. It makes multiple contacts with different domains of the 23S rRNA in the assembled 50S subunit and ribosome. Its function is as follows. Forms part of the polypeptide exit tunnel. The sequence is that of Large ribosomal subunit protein uL4 from Clostridium novyi (strain NT).